A 396-amino-acid polypeptide reads, in one-letter code: S-adenosylmethionine synthase (396 aa).

His-16 contributes to the ATP binding site. Asp-18 is a binding site for Mg(2+). Glu-44 provides a ligand contact to K(+). Residues Glu-57 and Gln-100 each contribute to the L-methionine site. The flexible loop stretch occupies residues 100–110 (QSPDINQGVDR). ATP contacts are provided by residues 165–167 (DAK), 231–232 (KF), Asp-240, 246–247 (RK), Ala-263, and Lys-267. Asp-240 contributes to the L-methionine binding site. L-methionine is bound at residue Lys-271.

It belongs to the AdoMet synthase family. Homotetramer; dimer of dimers. The cofactor is Mg(2+). Requires K(+) as cofactor.

Its subcellular location is the cytoplasm. The catalysed reaction is L-methionine + ATP + H2O = S-adenosyl-L-methionine + phosphate + diphosphate. The protein operates within amino-acid biosynthesis; S-adenosyl-L-methionine biosynthesis; S-adenosyl-L-methionine from L-methionine: step 1/1. Functionally, catalyzes the formation of S-adenosylmethionine (AdoMet) from methionine and ATP. The overall synthetic reaction is composed of two sequential steps, AdoMet formation and the subsequent tripolyphosphate hydrolysis which occurs prior to release of AdoMet from the enzyme. The protein is S-adenosylmethionine synthase of Ectopseudomonas mendocina (strain ymp) (Pseudomonas mendocina).